The primary structure comprises 228 residues: GrpE protein homolog, mitochondrial (228 aa).

A compositionally biased stretch (basic and acidic residues) spans Asp46 to Asn57. Positions Asp46 to Glu66 are disordered.

This sequence belongs to the GrpE family. As to quaternary structure, component of the PAM complex, at least composed of SSC1 (mtHsp70), MGE1, TIM44, PAM16/TIM16, PAM17 and PAM18/TIM14. Interacts with SSQ1. Post-translationally, the N-terminus is blocked.

Its subcellular location is the mitochondrion matrix. Functionally, essential component of the PAM complex, a complex required for the translocation of transit peptide-containing proteins from the inner membrane into the mitochondrial matrix in an ATP-dependent manner. Seems to control the nucleotide-dependent binding of SSC1 to substrate proteins and the association of SSC1 with TIM44. This Saccharomyces cerevisiae (strain ATCC 204508 / S288c) (Baker's yeast) protein is GrpE protein homolog, mitochondrial (MGE1).